The sequence spans 365 residues: NADH-quinone oxidoreductase subunit 8 (365 aa).

9 helical membrane-spanning segments follow: residues 11–31 (WMVA…FAFM), 80–100 (FLFV…FGLI), 120–140 (LGIL…FLSG), 157–177 (ASLI…VLLV), 192–212 (HGWL…ASMA), 252–272 (FITA…MPVL), 273–293 (EVPY…FIWI), 310–330 (WGFL…VVAL), and 336–356 (YLLY…LYTP).

It belongs to the complex I subunit 1 family. NDH-1 is composed of 15 different subunits, Nqo1 to Nqo15. The complex has a L-shaped structure, with the hydrophobic arm (subunits Nqo7, Nqo8 and Nqo10 to Nqo14) embedded in the membrane and the hydrophilic peripheral arm (subunits Nqo1 to Nqo6, Nqo9 and Nqo15) protruding into the bacterial cytoplasm. The hydrophilic domain contains all the redox centers.

It is found in the cell inner membrane. The catalysed reaction is a quinone + NADH + 5 H(+)(in) = a quinol + NAD(+) + 4 H(+)(out). In terms of biological role, NDH-1 shuttles electrons from NADH, via FMN and iron-sulfur (Fe-S) centers, to quinones in the respiratory chain. The immediate electron acceptor for the enzyme in this species is menaquinone. Couples the redox reaction to proton translocation (for every two electrons transferred, four hydrogen ions are translocated across the cytoplasmic membrane), and thus conserves the redox energy in a proton gradient required for the synthesis of ATP. The chain is NADH-quinone oxidoreductase subunit 8 (nqo8) from Thermus thermophilus (strain ATCC 27634 / DSM 579 / HB8).